The chain runs to 251 residues: 3-dehydroquinate dehydratase (251 aa).

Residues 47–49 (EWR) and Arg83 contribute to the 3-dehydroquinate site. The Proton donor/acceptor role is filled by His144. Lys171 functions as the Schiff-base intermediate with substrate in the catalytic mechanism. 3 residues coordinate 3-dehydroquinate: Arg214, Ser233, and Gln237.

The protein belongs to the type-I 3-dehydroquinase family. In terms of assembly, homodimer.

The catalysed reaction is 3-dehydroquinate = 3-dehydroshikimate + H2O. Its pathway is metabolic intermediate biosynthesis; chorismate biosynthesis; chorismate from D-erythrose 4-phosphate and phosphoenolpyruvate: step 3/7. In terms of biological role, involved in the third step of the chorismate pathway, which leads to the biosynthesis of aromatic amino acids. Catalyzes the cis-dehydration of 3-dehydroquinate (DHQ) and introduces the first double bond of the aromatic ring to yield 3-dehydroshikimate. The protein is 3-dehydroquinate dehydratase of Klebsiella pneumoniae (strain 342).